Here is a 578-residue protein sequence, read N- to C-terminus: Zinc finger protein with KRAB and SCAN domains 8 (578 aa).

Residues 1–20 (MAEESRKPSAPSPPDQTPEE) form a disordered region. Serine 12 carries the phosphoserine modification. A Glycyl lysine isopeptide (Lys-Gly) (interchain with G-Cter in SUMO2) cross-link involves residue lysine 26. One can recognise an SCAN box domain in the interval 51-133 (RLRFRQLRYQ…TLLEDLERQI (83 aa)). A disordered region spans residues 158-205 (ASAPEPPNTQLQSEATQHKSPVPQESQERAMSTSQSPTRSQKGSSGDQ). Residues 165–205 (NTQLQSEATQHKSPVPQESQERAMSTSQSPTRSQKGSSGDQ) show a composition bias toward polar residues. Residues lysine 176 and lysine 199 each participate in a glycyl lysine isopeptide (Lys-Gly) (interchain with G-Cter in SUMO2) cross-link. Serine 201 is subject to Phosphoserine. Positions 220-316 (EKIEDMAVSL…GRLERQRGNP (97 aa)) constitute a KRAB domain. Glycyl lysine isopeptide (Lys-Gly) (interchain with G-Cter in SUMO2) cross-links involve residues lysine 221, lysine 272, and lysine 288. 2 C2H2-type zinc fingers span residues 322 to 344 (HKCD…WRIH) and 350 to 372 (YQCN…QDIH). Glycyl lysine isopeptide (Lys-Gly) (interchain with G-Cter in SUMO2) cross-links involve residues lysine 374 and lysine 376. 7 C2H2-type zinc fingers span residues 378–400 (YHCK…QRIH), 406–428 (YQCN…QRIH), 434–456 (YECN…QRIH), 462–484 (YECD…QRSH), 490–512 (YKCN…QRIH), 518–540 (YKCK…LRIH), and 546–568 (YQCN…QRIH). Residues lysine 413 and lysine 441 each participate in a glycyl lysine isopeptide (Lys-Gly) (interchain with G-Cter in SUMO2) cross-link. Residue lysine 502 forms a Glycyl lysine isopeptide (Lys-Gly) (interchain with G-Cter in SUMO2) linkage. A Glycyl lysine isopeptide (Lys-Gly) (interchain with G-Cter in SUMO2) cross-link involves residue lysine 572.

The protein belongs to the krueppel C2H2-type zinc-finger protein family.

It localises to the nucleus. Its function is as follows. May be involved in transcriptional regulation. The chain is Zinc finger protein with KRAB and SCAN domains 8 (ZKSCAN8) from Homo sapiens (Human).